The chain runs to 183 residues: Threonylcarbamoyl-AMP synthase (183 aa).

A YrdC-like domain is found at 1–183; the sequence is MNFTEIAEKL…LLTDQLIREG (183 aa).

The protein belongs to the SUA5 family. TsaC subfamily.

The protein localises to the cytoplasm. The catalysed reaction is L-threonine + hydrogencarbonate + ATP = L-threonylcarbamoyladenylate + diphosphate + H2O. Its function is as follows. Required for the formation of a threonylcarbamoyl group on adenosine at position 37 (t(6)A37) in tRNAs that read codons beginning with adenine. Catalyzes the conversion of L-threonine, HCO(3)(-)/CO(2) and ATP to give threonylcarbamoyl-AMP (TC-AMP) as the acyladenylate intermediate, with the release of diphosphate. The chain is Threonylcarbamoyl-AMP synthase from Actinobacillus succinogenes (strain ATCC 55618 / DSM 22257 / CCUG 43843 / 130Z).